The chain runs to 406 residues: 3-oxoacyl-[acyl-carrier-protein] synthase 1 (406 aa).

The region spanning 1-403 (MRRTVITGFG…GTNATLIFKR (403 aa)) is the Ketosynthase family 3 (KS3) domain. Residues cysteine 162, histidine 297, and histidine 332 each act as for beta-ketoacyl synthase activity in the active site.

It belongs to the thiolase-like superfamily. Beta-ketoacyl-ACP synthases family. In terms of assembly, homodimer.

Its subcellular location is the cytoplasm. The catalysed reaction is a fatty acyl-[ACP] + malonyl-[ACP] + H(+) = a 3-oxoacyl-[ACP] + holo-[ACP] + CO2. It carries out the reaction (3Z)-decenoyl-[ACP] + malonyl-[ACP] + H(+) = 3-oxo-(5Z)-dodecenoyl-[ACP] + holo-[ACP] + CO2. The protein operates within lipid metabolism; fatty acid biosynthesis. Involved in the type II fatty acid elongation cycle. Catalyzes the elongation of a wide range of acyl-ACP by the addition of two carbons from malonyl-ACP to an acyl acceptor. Can also use unsaturated fatty acids. Catalyzes a key reaction in unsaturated fatty acid (UFA) synthesis, the elongation of the cis-3-decenoyl-ACP produced by FabA. The protein is 3-oxoacyl-[acyl-carrier-protein] synthase 1 (fabB) of Haemophilus influenzae (strain ATCC 51907 / DSM 11121 / KW20 / Rd).